An 845-amino-acid chain; its full sequence is Beta-mannosidase B (845 aa).

Residues 1 to 20 (MSKLQQFPLSKGWSFRDSED) form a disordered region. Asparagine 252 carries an N-linked (GlcNAc...) asparagine glycan. Residue glutamate 432 is the Proton donor of the active site. Asparagine 717 and asparagine 723 each carry an N-linked (GlcNAc...) asparagine glycan.

The protein belongs to the glycosyl hydrolase 2 family. Beta-mannosidase B subfamily.

It catalyses the reaction Hydrolysis of terminal, non-reducing beta-D-mannose residues in beta-D-mannosides.. Its pathway is glycan metabolism; N-glycan degradation. Exoglycosidase that cleaves the single beta-linked mannose residue from the non-reducing end of beta-mannosidic oligosaccharides of various complexity and length. Prefers mannobiose over mannotriose and has no activity against polymeric mannan. Is also severely restricted by galactosyl substitutions at the +1 subsite. In Neosartorya fischeri (strain ATCC 1020 / DSM 3700 / CBS 544.65 / FGSC A1164 / JCM 1740 / NRRL 181 / WB 181) (Aspergillus fischerianus), this protein is Beta-mannosidase B (mndB).